The chain runs to 732 residues: Alpha-galactosidase Mel36A (732 aa).

Residues 370–371 (DD), Trp415, Arg447, 480–484 (KWDMN), 530–533 (CSGG), and Asp552 contribute to the substrate site. The active-site Nucleophile is the Asp482. Asp552 (proton donor) is an active-site residue.

It belongs to the glycosyl hydrolase 36 family. As to quaternary structure, homotetramer.

The enzyme catalyses Hydrolysis of terminal, non-reducing alpha-D-galactose residues in alpha-D-galactosides, including galactose oligosaccharides, galactomannans and galactolipids.. Functionally, hydrolyzes the short-chain alpha-galactosaccharide raffinose. The polypeptide is Alpha-galactosidase Mel36A (Lactobacillus acidophilus (strain ATCC 700396 / NCK56 / N2 / NCFM)).